A 146-amino-acid chain; its full sequence is Large ribosomal subunit protein uL15 (146 aa).

The span at 1–13 (MKLHELKPSEGSR) shows a compositional bias: basic and acidic residues. Residues 1–57 (MKLHELKPSEGSRKTRNRVGRGIGSGNGKTAGKGHKGQNARSGGGVRPGFEGGQMPL) are disordered. Composition is skewed to gly residues over residues 21-31 (RGIGSGNGKTA) and 42-52 (SGGGVRPGFEG).

The protein belongs to the universal ribosomal protein uL15 family. Part of the 50S ribosomal subunit.

In terms of biological role, binds to the 23S rRNA. This is Large ribosomal subunit protein uL15 from Bacillus subtilis (strain 168).